The following is a 459-amino-acid chain: tRNA modification GTPase MnmE (459 aa).

Residues arginine 29, glutamate 91, and arginine 130 each coordinate (6S)-5-formyl-5,6,7,8-tetrahydrofolate. The TrmE-type G domain maps to 225-381 (GVKVAIVGRP…LEEALEQLVT (157 aa)). Position 235 (asparagine 235) interacts with K(+). Residues 235-240 (NVGKSS), 254-260 (TDLPGTT), and 279-282 (DTAG) each bind GTP. Serine 239 contacts Mg(2+). 3 residues coordinate K(+): threonine 254, leucine 256, and threonine 259. A Mg(2+)-binding site is contributed by threonine 260. Residue lysine 459 coordinates (6S)-5-formyl-5,6,7,8-tetrahydrofolate.

This sequence belongs to the TRAFAC class TrmE-Era-EngA-EngB-Septin-like GTPase superfamily. TrmE GTPase family. In terms of assembly, homodimer. Heterotetramer of two MnmE and two MnmG subunits. It depends on K(+) as a cofactor.

Its subcellular location is the cytoplasm. Functionally, exhibits a very high intrinsic GTPase hydrolysis rate. Involved in the addition of a carboxymethylaminomethyl (cmnm) group at the wobble position (U34) of certain tRNAs, forming tRNA-cmnm(5)s(2)U34. The protein is tRNA modification GTPase MnmE of Synechococcus sp. (strain JA-2-3B'a(2-13)) (Cyanobacteria bacterium Yellowstone B-Prime).